The chain runs to 98 residues: MAEKLDDAARAKAVASLADSGWEDVQGRDAIHKTFVFKNFTRAFGWMTQVAIVAEKMDHHPEWSNVYKTVEVTLATHDVGGLSELDVTLAQKMDRLAQ.

The protein belongs to the pterin-4-alpha-carbinolamine dehydratase family.

The enzyme catalyses (4aS,6R)-4a-hydroxy-L-erythro-5,6,7,8-tetrahydrobiopterin = (6R)-L-erythro-6,7-dihydrobiopterin + H2O. This Jannaschia sp. (strain CCS1) protein is Putative pterin-4-alpha-carbinolamine dehydratase.